The chain runs to 445 residues: FAS-associated factor 2 (445 aa).

The residue at position 2 (A2) is an N-acetylalanine. Positions 12–48 constitute a UBA domain; it reads EQTEKLLQFQDLTGIESMEQCRLALEQHNWNMEAAVQ. N6-acetyllysine is present on K167. Residues 275–350 adopt a coiled-coil conformation; that stretch reads SERLEREERN…EEKERKLECL (76 aa). The segment at 300–361 is disordered; the sequence is SLRADQEKER…PEPSPDDPES (62 aa). Over residues 303–348 the composition is skewed to basic and acidic residues; that stretch reads ADQEKERKKREEKERKRRKEEEVQQQKLAEERRRQNLQEEKERKLE. Residues 357–439 form the UBX domain; that stretch reads DDPESVKIIF…GLSHTEVLFV (83 aa).

As to quaternary structure, identified in a complex that contains SEL1L, OS9, FAF2/UBXD8, UBE2J1/UBC6E and AUP1. Interacts with YOD1. Interacts (via N-terminus) with UBQLN2 (via C-terminus). Interacts with PNPLA2. Interacts with ZFAND2B; probably through VCP. Interacts with LMBR1L and UBAC2.

Its subcellular location is the cytoplasm. It localises to the lipid droplet. The protein resides in the endoplasmic reticulum. Plays an important role in endoplasmic reticulum-associated degradation (ERAD) that mediates ubiquitin-dependent degradation of misfolded endoplasmic reticulum proteins. By controlling the steady-state expression of the IGF1R receptor, indirectly regulates the insulin-like growth factor receptor signaling pathway. Involved in inhibition of lipid droplet degradation by binding to phospholipase PNPL2 and inhibiting its activity by promoting dissociation of PNPL2 from its endogenous activator, ABHD5 which inhibits the rate of triacylglycerol hydrolysis. Involved in stress granule disassembly: associates with ubiquitinated G3BP1 in response to heat shock, thereby promoting interaction between ubiquitinated G3BP1 and VCP, followed by G3BP1 extraction from stress granules and stress granule disassembly. This chain is FAS-associated factor 2 (Faf2), found in Mus musculus (Mouse).